A 588-amino-acid chain; its full sequence is Tetratricopeptide repeat protein 39B (588 aa).

TPR repeat units lie at residues 294–327 (SIIL…QQEW), 485–518 (CLVQ…EKRV), and 526–559 (PFTF…YKDY).

It belongs to the TTC39 family.

May be involved in lipid metabolism. This chain is Tetratricopeptide repeat protein 39B (ttc39b), found in Xenopus tropicalis (Western clawed frog).